The sequence spans 501 residues: MTDIQNKNYIIALDQGTTSSRAIIFDRDANVVCTAQREFAQHYPQAGWVEHDPMEIFATQSAVMVEALAQAGLHHDQVAAIGITNQRETTVVWDKNTGRPIYNAIVWQCRRSTEICQQLKRDGLEDYIRETTGLVTDPYFSGTKLKWILDNVEGSRERARNGELLFGTIDSWLIWKFTGGKTHVTDYTNASRTMLFNIHTLEWDAKMLEVLDIPREMLPEVKSSSEIYGRTKSGIAIGGIAGDQQAALFGQMCVEPGQAKNTYGTGCFLLMNTGDKAVKSQHGMLTTIACGPSGEVAYALEGAVFNGGSTVQWLRDELKIINDAHDTEYFAGKVKDSNGVYLVPAFTGLGAPYWDPYARGALFGLTRGVRVDHIIRAALESIAYQTRDVLDAMQQDSGERLKALRVDGGAVANNFLMQFQADILGTQVERPQMRETTALGAAYLAGLACGFWGSLEELRGKAVIEREFEPQLAEAEKEGLYAGWKKAVSRTRDWEPHDEAK.

ADP is bound at residue T17. ATP is bound by residues T17, T18, and S19. T17 contacts sn-glycerol 3-phosphate. ADP is bound at residue R21. The sn-glycerol 3-phosphate site is built by R87, E88, Y139, and D243. Glycerol is bound by residues R87, E88, Y139, D243, and Q244. ADP-binding residues include T265 and G308. The ATP site is built by T265, G308, Q312, and G409. Positions 409 and 413 each coordinate ADP.

The protein belongs to the FGGY kinase family.

The catalysed reaction is glycerol + ATP = sn-glycerol 3-phosphate + ADP + H(+). Its pathway is polyol metabolism; glycerol degradation via glycerol kinase pathway; sn-glycerol 3-phosphate from glycerol: step 1/1. Its activity is regulated as follows. Inhibited by fructose 1,6-bisphosphate (FBP). In terms of biological role, key enzyme in the regulation of glycerol uptake and metabolism. Catalyzes the phosphorylation of glycerol to yield sn-glycerol 3-phosphate. This is Glycerol kinase from Pseudomonas fluorescens (strain ATCC BAA-477 / NRRL B-23932 / Pf-5).